A 199-amino-acid polypeptide reads, in one-letter code: Peroxiredoxin 2 (199 aa).

Residues 8–166 (AFIGQPAPNF…TLRLIQAFQF (159 aa)) form the Thioredoxin domain. Residue Cys53 is the Cysteine sulfenic acid (-SOH) intermediate of the active site.

This sequence belongs to the peroxiredoxin family. AhpC/Prx1 subfamily. Homodimer; disulfide-linked, upon oxidation.

It carries out the reaction a hydroperoxide + [thioredoxin]-dithiol = an alcohol + [thioredoxin]-disulfide + H2O. Its function is as follows. Thiol-specific peroxidase that catalyzes the reduction of hydrogen peroxide and organic hydroperoxides to water and alcohols, respectively. Plays a role in cell protection against oxidative stress by detoxifying peroxides and as sensor of hydrogen peroxide-mediated signaling events. The chain is Peroxiredoxin 2 (tsa-2) from Brugia malayi (Filarial nematode worm).